Consider the following 443-residue polypeptide: Two-pore potassium channel 2 (443 aa).

Over 1-144 (MANDGNGDNN…KTDQQSDSKT (144 aa)) the chain is Cytoplasmic. Residues 67–109 (SLPIDALSQNPSTSSSATTSFSDSTDLLLPLTEPNKPVRKSKP) form a disordered region. Residues 72–98 (ALSQNPSTSSSATTSFSDSTDLLLPLT) are compositionally biased toward low complexity. A helical membrane pass occupies residues 145–165 (IVNQAVALLVVYLSLGVLIYW). Positions 181 to 200 (DALYFCIVTMCTIGYGDITP) form an intramembrane region, pore-forming. A helical transmembrane segment spans residues 208–228 (FSIFFVLVGFGFMDILLSGMV). At 229–274 (TYVLDLQENYMLETARNESLNLNDRDKVRSYIIDVKKGRMRIRLKV) the chain is on the cytoplasmic side. The chain crosses the membrane as a helical span at residues 275 to 295 (GLALGVVVLCLGFGVLIMHFV). The segment at residues 302 to 321 (DSFYFSVMSVTTVGYGDRAF) is an intramembrane region (pore-forming). The helical transmembrane segment at 328–348 (LLAAMWLLVSTLAVARAILFL) threads the bilayer. Residues 349-443 (AESRVDKRNR…TKDLPTATSI (95 aa)) lie on the Cytoplasmic side of the membrane. EF-hand domains lie at 365 to 400 (LGESMSISQFLDADIDCNGCVSKAEFVIYKLKKMDK) and 404 to 439 (KDINPIGFQFDKLDRTNSGRITLLDLLESSTKDLPT). Ca(2+) contacts are provided by Asp-378, Asp-380, Asn-382, Cys-384, Glu-389, Asp-417, Ser-421, Arg-423, and Asp-428.

It belongs to the two pore domain potassium channel (TC 1.A.1.7) family. Homodimer. As to expression, expressed in roots, stems, leaves and flowers.

The protein localises to the vacuole membrane. Probable voltage-independent potassium-selective tonoplast ion channel. The chain is Two-pore potassium channel 2 (TPK2) from Arabidopsis thaliana (Mouse-ear cress).